Here is a 109-residue protein sequence, read N- to C-terminus: Tyrosine-protein phosphatase 4 (109 aa).

Residues 1 to 109 (SKSASIVMLT…QNSGNHPIVI (109 aa)) enclose the Tyrosine-protein phosphatase domain. Residue Glu78 coordinates substrate.

It belongs to the protein-tyrosine phosphatase family.

It catalyses the reaction O-phospho-L-tyrosyl-[protein] + H2O = L-tyrosyl-[protein] + phosphate. This Styela plicata (Wrinkled sea squirt) protein is Tyrosine-protein phosphatase 4 (STY-4).